Here is a 68-residue protein sequence, read N- to C-terminus: Large ribosomal subunit protein uL30 (68 aa).

This sequence belongs to the universal ribosomal protein uL30 family. As to quaternary structure, part of the 50S ribosomal subunit.

This Paenarthrobacter aurescens (strain TC1) protein is Large ribosomal subunit protein uL30.